A 362-amino-acid chain; its full sequence is ATP synthase F(1) complex catalytic subunit beta, mitochondrial (362 aa).

Position 14 is an N6-acetyllysine; alternate (Lys14). At Lys14 the chain carries N6-succinyllysine; alternate. Position 51 is an N6-acetyllysine (Lys51). Residues Val62, Val63, Gly64, Lys65, Thr66, and Val67 each contribute to the ADP site. An ATP-binding site is contributed by Val62. Positions 62, 63, 64, 65, and 66 each coordinate phosphate. ATP contacts are provided by Gly64, Lys65, Thr66, and Val67. Thr66 contacts Mg(2+). Glu91 contributes to the Mg(2+) binding site. An N6-acetyllysine; alternate mark is found at Lys112 and Lys117. An N6-succinyllysine; alternate mark is found at Lys112 and Lys117. Residue Thr165 is modified to Phosphothreonine. An N6-acetyllysine modification is found at Lys279. Ser286 carries the phosphoserine modification. Lys333 and Lys338 each carry N6-acetyllysine.

The protein belongs to the ATPase alpha/beta chains family. Homotrimer. Component of the ATP synthase complex composed at least of ATP5F1A/subunit alpha, ATP5F1B/subunit beta, ATP5MC1/subunit c (homooctomer), MT-ATP6/subunit a, MT-ATP8/subunit 8, ATP5ME/subunit e, ATP5MF/subunit f, ATP5MG/subunit g, ATP5MK/subunit k, ATP5MJ/subunit j, ATP5F1C/subunit gamma, ATP5F1D/subunit delta, ATP5F1E/subunit epsilon, ATP5PF/subunit F6, ATP5PB/subunit b, ATP5PD/subunit d, ATP5PO/subunit OSCP. ATP synthase complex consists of a soluble F(1) head domain (subunits alpha(3) and beta(3)) - the catalytic core - and a membrane F(0) domain - the membrane proton channel (subunits c, a, 8, e, f, g, k and j). These two domains are linked by a central stalk (subunits gamma, delta, and epsilon) rotating inside the F1 region and a stationary peripheral stalk (subunits F6, b, d, and OSCP). Interacts with PPIF. Interacts with BCL2L1 isoform BCL-X(L); the interaction mediates the association of BCL2L1 isoform BCL-X(L) with the mitochondrial membrane F(1)F(0) ATP synthase and enhances neurons metabolic efficiency. Interacts with CLN5 and PPT1. Interacts with S100A1; this interaction increases F1-ATPase activity. Interacts with MTLN. Interacts with TTC5/STRAP; the interaction results in decreased mitochondrial ATP production.

Its subcellular location is the mitochondrion inner membrane. It catalyses the reaction ATP + H2O + 4 H(+)(in) = ADP + phosphate + 5 H(+)(out). Catalytic subunit beta, of the mitochondrial membrane ATP synthase complex (F(1)F(0) ATP synthase or Complex V) that produces ATP from ADP in the presence of a proton gradient across the membrane which is generated by electron transport complexes of the respiratory chain. ATP synthase complex consist of a soluble F(1) head domain - the catalytic core - and a membrane F(1) domain - the membrane proton channel. These two domains are linked by a central stalk rotating inside the F(1) region and a stationary peripheral stalk. During catalysis, ATP synthesis in the catalytic domain of F(1) is coupled via a rotary mechanism of the central stalk subunits to proton translocation. In vivo, can only synthesize ATP although its ATP hydrolase activity can be activated artificially in vitro. With the subunit alpha (ATP5F1A), forms the catalytic core in the F(1) domain. The chain is ATP synthase F(1) complex catalytic subunit beta, mitochondrial from Mesocricetus auratus (Golden hamster).